The sequence spans 209 residues: Holliday junction branch migration complex subunit RuvA (209 aa).

The domain I stretch occupies residues 1–64; that stretch reads MIGKLKGLVD…EDSIKLYGFA (64 aa). The interval 65–143 is domain II; sequence SETEREWFRL…ALGASLHTLA (79 aa). Residues 144-154 form a flexible linker region; that stretch reads GAGSEGAGVEA. Residues 155–209 form a domain III region; it reads PASGAVSDAISVLVNLGFGRSQAAVAVAASSKALGSGAGAGDLAKRALQELAQSG.

This sequence belongs to the RuvA family. In terms of assembly, homotetramer. Forms an RuvA(8)-RuvB(12)-Holliday junction (HJ) complex. HJ DNA is sandwiched between 2 RuvA tetramers; dsDNA enters through RuvA and exits via RuvB. An RuvB hexamer assembles on each DNA strand where it exits the tetramer. Each RuvB hexamer is contacted by two RuvA subunits (via domain III) on 2 adjacent RuvB subunits; this complex drives branch migration. In the full resolvosome a probable DNA-RuvA(4)-RuvB(12)-RuvC(2) complex forms which resolves the HJ.

It localises to the cytoplasm. Its function is as follows. The RuvA-RuvB-RuvC complex processes Holliday junction (HJ) DNA during genetic recombination and DNA repair, while the RuvA-RuvB complex plays an important role in the rescue of blocked DNA replication forks via replication fork reversal (RFR). RuvA specifically binds to HJ cruciform DNA, conferring on it an open structure. The RuvB hexamer acts as an ATP-dependent pump, pulling dsDNA into and through the RuvAB complex. HJ branch migration allows RuvC to scan DNA until it finds its consensus sequence, where it cleaves and resolves the cruciform DNA. The chain is Holliday junction branch migration complex subunit RuvA from Methylocella silvestris (strain DSM 15510 / CIP 108128 / LMG 27833 / NCIMB 13906 / BL2).